A 521-amino-acid polypeptide reads, in one-letter code: Type-2 serine--tRNA ligase (521 aa).

An L-serine-binding site is contributed by Ala-316. Cys-318 lines the Zn(2+) pocket. Residue Arg-347 participates in L-serine binding. ATP is bound by residues 347-349 and 358-359; these read RWE and RV. 364-366 provides a ligand contact to L-serine; sequence RVE. 2 residues coordinate Zn(2+): Glu-366 and Cys-473. Residue Arg-480 participates in ATP binding.

The protein belongs to the class-II aminoacyl-tRNA synthetase family. Type-2 seryl-tRNA synthetase subfamily. In terms of assembly, homodimer. Zn(2+) is required as a cofactor.

Its subcellular location is the cytoplasm. It catalyses the reaction tRNA(Ser) + L-serine + ATP = L-seryl-tRNA(Ser) + AMP + diphosphate + H(+). The catalysed reaction is tRNA(Sec) + L-serine + ATP = L-seryl-tRNA(Sec) + AMP + diphosphate + H(+). It functions in the pathway aminoacyl-tRNA biosynthesis; selenocysteinyl-tRNA(Sec) biosynthesis; L-seryl-tRNA(Sec) from L-serine and tRNA(Sec): step 1/1. Functionally, catalyzes the attachment of serine to tRNA(Ser). Is also able to aminoacylate tRNA(Sec) with serine, to form the misacylated tRNA L-seryl-tRNA(Sec), which will be further converted into selenocysteinyl-tRNA(Sec). The sequence is that of Type-2 serine--tRNA ligase (serS) from Methanocaldococcus jannaschii (strain ATCC 43067 / DSM 2661 / JAL-1 / JCM 10045 / NBRC 100440) (Methanococcus jannaschii).